The following is a 361-amino-acid chain: S-adenosylmethionine:tRNA ribosyltransferase-isomerase (361 aa).

It belongs to the QueA family. In terms of assembly, monomer.

The protein localises to the cytoplasm. It catalyses the reaction 7-aminomethyl-7-carbaguanosine(34) in tRNA + S-adenosyl-L-methionine = epoxyqueuosine(34) in tRNA + adenine + L-methionine + 2 H(+). It participates in tRNA modification; tRNA-queuosine biosynthesis. In terms of biological role, transfers and isomerizes the ribose moiety from AdoMet to the 7-aminomethyl group of 7-deazaguanine (preQ1-tRNA) to give epoxyqueuosine (oQ-tRNA). This Rhizobium johnstonii (strain DSM 114642 / LMG 32736 / 3841) (Rhizobium leguminosarum bv. viciae) protein is S-adenosylmethionine:tRNA ribosyltransferase-isomerase.